The following is a 1117-amino-acid chain: Sodium-driven chloride bicarbonate exchanger (1117 aa).

Disordered regions lie at residues 1-23 (MEIK…EEAV) and 58-97 (GRKS…TPSQ). Topologically, residues 1–508 (MEIKDQGAQM…DFRDAFSLQC (508 aa)) are cytoplasmic. Over residues 59-76 (RKSHRRHRHRGHKHRKRD) the composition is skewed to basic residues. At serine 89 the chain carries Phosphoserine. Threonine 94 carries the phosphothreonine modification. Serine 275 bears the Phosphoserine mark. Disordered regions lie at residues 282-309 (DFSK…KGPP) and 431-476 (WDPS…PELQ). A helical membrane pass occupies residues 509-529 (LASFLFLYCACMSPVITFGGL). The Extracellular portion of the chain corresponds to 530-537 (LGEATEGR). The chain crosses the membrane as a helical span at residues 538-558 (ISAIESLFGASMTGIAYSLFG). Residues 559-561 (GQP) are Cytoplasmic-facing. A helical transmembrane segment spans residues 562 to 582 (LTILGSTGPVLVFEKILFKFC). Over 583 to 595 (KEYGLSYLSLRAS) the chain is Extracellular. Residues 596-616 (IGLWTATLCIILVATDASSLV) traverse the membrane as a helical segment. At 617–625 (CYITRFTEE) the chain is on the cytoplasmic side. Residues 626 to 646 (AFASLICIIFIYEALEKLFEL) form a helical membrane-spanning segment. The Extracellular segment spans residues 647–719 (SESYPINMHN…VGRACGHGHP (73 aa)). Residues asparagine 676, asparagine 686, and asparagine 696 are each glycosylated (N-linked (GlcNAc...) asparagine). Residues 720–740 (YVPDVLFWSVILFFSTVTMSA) form a helical membrane-spanning segment. Over 741–761 (TLKQFKTSRYFPTKVRSIVSD) the chain is Cytoplasmic. Residues 762–782 (FAVFLTILCMVLIDYAIGIPS) traverse the membrane as a helical segment. Over 783 to 808 (PKLQVPSVFKPTRDDRGWFVTPLGPN) the chain is Extracellular. The helical transmembrane segment at 809–829 (PWWTIIAAIIPALLCTILIFM) threads the bilayer. The Cytoplasmic portion of the chain corresponds to 830–854 (DQQITAVIINRKEHKLKKGCGYHLD). A helical membrane pass occupies residues 855–875 (LLMVAVMLGVCSIMGLPWFVA). At 876–911 (ATVLSITHVNSLKLESECSAPGEQPKFLGIREQRVT) the chain is on the extracellular side. The helical transmembrane segment at 912–932 (GLMIFILMGSSVFMTSILKFI) threads the bilayer. Residues 933-934 (PM) are Cytoplasmic-facing. A helical transmembrane segment spans residues 935 to 955 (PVLYGVFLYMGASSLKGIQLF). Over 956 to 997 (DRIKLFWMPAKHQPDFIYLRHVPLRKVHLFTVIQMSCLGLLW) the chain is Extracellular. The chain crosses the membrane as a helical span at residues 998 to 1018 (IIKVSRAAIVFPMMVLALVFV). The Cytoplasmic segment spans residues 1019-1117 (RKLMDFLFTK…SRFPSKSSPS (99 aa)). Phosphoserine occurs at positions 1056 and 1084.

The protein belongs to the anion exchanger (TC 2.A.31) family. N-glycosylated. In the brain, detected in cerebral cortex, subcortex, cerebellum, hippocampus and medulla (at protein level). Expressed in neurons but not in astrocytes (at protein level). Isoforms starting with Met-Glu-Ile-Lys are found predominantly in the brain with lower levels in the eye while isoforms starting with Met-Cys-Asp-Leu are most abundant in the kidney with lower levels in the duodenum, jejunum and ileum (at protein level). In the kidney, isoforms starting with Met-Cys-Asp-Leu are primarily expressed in the cortex, the outer stripe of the outer medulla and the inner stripe of the outer medulla (ISOM) but are not detectable in the inner medulla (IM) while isoforms starting with Met-Glu-Ile-Lys are predominantly expressed in the ISOM and IM. Expressed in the brain, in the hippocampus as well as in dentate gyrus, cortical layers, cerebellum, olfactory bulb and in the epithelial cells of the choroid plexus. Detected in pituitary, testis, kidney and ileum. Detected also in spleen and lung. As to expression, mainly expressed in the jejenum (at protein level).

The protein resides in the basolateral cell membrane. It is found in the apical cell membrane. It localises to the cell projection. Its subcellular location is the dendrite. The protein localises to the axon. The protein resides in the perikaryon. It is found in the presynapse. It localises to the postsynapse. The enzyme catalyses 2 hydrogencarbonate(out) + chloride(in) + Na(+)(out) = 2 hydrogencarbonate(in) + chloride(out) + Na(+)(in). Sodium/bicarbonate cotransporter which plays an important role in regulating intracellular pH. Has been shown to act as a sodium/bicarbonate cotransporter in exchange for intracellular chloride. Has also been shown to act as a sodium/biocarbonate cotransporter which does not couple net influx of bicarbonate to net efflux of chloride, with the observed chloride efflux being due to chloride self-exchange. Controls neuronal pH and may contribute to the secretion of cerebrospinal fluid. Acting on presynaptic intracellular pH, it promotes GABA release, reduces the excitability of CA1 pyramidal neurons, and modulates short-term synaptic plasticity. Required in retinal cells to maintain normal pH which is necessary for normal vision. In the kidney, likely to mediate bicarbonate reclamation in the apical membrane of the proximal tubules. In terms of biological role, sodium/bicarbonate cotransporter which mediates cotransport of sodium and bicarbonate in association with an efflux of intracellular chloride and is involved in NaCl absorption in the small intestine. This is Sodium-driven chloride bicarbonate exchanger from Rattus norvegicus (Rat).